The sequence spans 451 residues: Trigger factor (451 aa).

The PPIase FKBP-type domain occupies Asp165–Leu250.

Belongs to the FKBP-type PPIase family. Tig subfamily.

It is found in the cytoplasm. The enzyme catalyses [protein]-peptidylproline (omega=180) = [protein]-peptidylproline (omega=0). Its function is as follows. Involved in protein export. Acts as a chaperone by maintaining the newly synthesized protein in an open conformation. Functions as a peptidyl-prolyl cis-trans isomerase. The chain is Trigger factor from Helicobacter acinonychis (strain Sheeba).